Here is a 466-residue protein sequence, read N- to C-terminus: MRSTKIVCTVGPRTDSYEMIEKMIDLGVNVFRINTSHGDWNEQEQKILKIKDLREKKKKPVAILIDLAGPKIRTGYLEKEFVELKEGQIFTLTTKEILGNEHIVSVNLSSLPKDVKKGDTILLSDGEIVLEVIETTDTEVKTVVKVGGKITHRRGVNVPTADLSVESITDRDREFIKLGTLHDVEFFALSFVRKPEDVLKAKEEIRKHGKEIPVISKIETKKALERLEEIIKVSDGIMVARGDLGVEIPIEEVPIVQKEIIKLSKYYSKPVIVATQILESMIENPFPTRAEVTDIANAIFDGADALLLTAETAVGKHPLEAIKVLSKVAKEAEKKLEFFRTIEYDTSDISEAISHACWQLSESLNAKLIITPTISGSTAVRVSKYNVSQPIVALTPEEKTYYRLSLVRKVIPVLAEKCSQELEFIEKGLKKVEEMGLAEKGDLVVLTSGVPGKVGTTNTIRVLKVD.

Arginine 32 contacts substrate. 3 residues coordinate K(+): asparagine 34, serine 36, and aspartate 66. Position 34–37 (34–37 (NTSH)) interacts with ATP. Arginine 73 contacts ATP. Glutamate 219 contributes to the Mg(2+) binding site. Substrate contacts are provided by glycine 242, aspartate 243, and threonine 275. Mg(2+) is bound at residue aspartate 243.

The protein belongs to the pyruvate kinase family. Homotetramer. A divalent metal cation is required as a cofactor.

It carries out the reaction pyruvate + ATP = phosphoenolpyruvate + ADP + H(+). Its pathway is carbohydrate degradation; glycolysis; pyruvate from D-glyceraldehyde 3-phosphate: step 5/5. With respect to regulation, allosterically activated by AMP and inhibited by ATP. This chain is Pyruvate kinase (pyk), found in Thermotoga maritima (strain ATCC 43589 / DSM 3109 / JCM 10099 / NBRC 100826 / MSB8).